We begin with the raw amino-acid sequence, 1199 residues long: DNA polymerase beta (1199 aa).

Belongs to the DNA polymerase type-B family.

It catalyses the reaction DNA(n) + a 2'-deoxyribonucleoside 5'-triphosphate = DNA(n+1) + diphosphate. DNA-directed DNA polymerase involved in viral DNA replication. In Ornithodoros (relapsing fever ticks), this protein is DNA polymerase beta.